The chain runs to 180 residues: Probable phospholipid hydroperoxide glutathione peroxidase (180 aa).

The active site involves C54.

Belongs to the glutathione peroxidase family.

It localises to the cytoplasm. It carries out the reaction a hydroperoxy polyunsaturated fatty acid + 2 glutathione = a hydroxy polyunsaturated fatty acid + glutathione disulfide + H2O. Its function is as follows. Protects cells and enzymes from oxidative damage, by catalyzing the reduction of hydrogen peroxide, lipid peroxides and organic hydroperoxide, by glutathione. This is Probable phospholipid hydroperoxide glutathione peroxidase (GPXHA-2) from Helianthus annuus (Common sunflower).